The primary structure comprises 318 residues: Cytochrome f (318 aa).

An N-terminal signal peptide occupies residues 1 to 34; it reads MQNRNFFEYPKNWIILLIPIFTTFNLLFTSDCYA. Phenylalanine 35, cysteine 55, cysteine 58, and histidine 59 together coordinate heme. The helical transmembrane segment at 284–303 threads the bilayer; it reads LQGLLVFLFLVVLAQVFLVL.

The protein belongs to the cytochrome f family. As to quaternary structure, the 4 large subunits of the cytochrome b6-f complex are cytochrome b6, subunit IV (17 kDa polypeptide, petD), cytochrome f and the Rieske protein, while the 4 small subunits are PetG, PetL, PetM and PetN. The complex functions as a dimer. Heme serves as cofactor.

The protein localises to the plastid. Its subcellular location is the chloroplast thylakoid membrane. In terms of biological role, component of the cytochrome b6-f complex, which mediates electron transfer between photosystem II (PSII) and photosystem I (PSI), cyclic electron flow around PSI, and state transitions. This chain is Cytochrome f, found in Chaetosphaeridium globosum (Charophycean green alga).